The following is a 658-amino-acid chain: MLYPQEFDVIVVGAGHAGTEAALAAARLGQRTLLLTQSLETLGQMSCNPSIGGIGKGHLVKEVDALGGAMALATDESGIQFRILNRSKGPAVRATRAQADRLLYKAAIRRRLENQPGLWLFQQAVDDLMLEGDRVVGAVTQVGVVFCARAVVLTAGTFLDGKIHVGLSHYAAGRAGEPSAIGLSARLKELKLPQGRLKTGTPPRIDGRSIDWSQCEEQPGDGMPGGVNAGQVPVFSFMAHAYGGARMHPQQLPCWITHTNQRTHAIIRSGFDRSPMFTGSIEGVGPRYCPSVEDKINRFADKDSHQVFLEPEGLGTHEVYPNGISTSLPFDIQYQLVRSMAGLENAHILRPGYAIEYDYFDPRALKSNFETRQIRGLFFAGQINGTTGYEEAAAQGLFAGVNAALQCRGDAPWLPGRDQAYLGVLVDDLITKGVTEPYRMFTSRAEFRLQLREDNADMRLTEVGRRMGLVDDARWEVFSRKRDAVLRETERLKATWVNPRNLPDIESGRVLGKPMAHEYSLFELLRRPDVDYAGLMSLDGGKYAAADVSRETLGMLSESVVEQVEIAAKYAGYIERQKGEVERAAHFETLRLPAGLDYAQVTALSIEARQVLSRHRPETLGQASRITGITPAAISLLLVHLKKGGFKGFMSANADAQA.

Residue 13 to 18 (GAGHAG) participates in FAD binding. 285–299 (GPRYCPSVEDKINRF) contacts NAD(+).

The protein belongs to the MnmG family. In terms of assembly, homodimer. Heterotetramer of two MnmE and two MnmG subunits. FAD is required as a cofactor.

It localises to the cytoplasm. Its function is as follows. NAD-binding protein involved in the addition of a carboxymethylaminomethyl (cmnm) group at the wobble position (U34) of certain tRNAs, forming tRNA-cmnm(5)s(2)U34. The sequence is that of tRNA uridine 5-carboxymethylaminomethyl modification enzyme MnmG from Verminephrobacter eiseniae (strain EF01-2).